The chain runs to 357 residues: Peptide chain release factor 1 (357 aa).

Glutamine 234 carries the N5-methylglutamine modification. The interval 283-313 is disordered; sequence SKKQEQRSSNRKQQVGSGDRSERIRTYNFPQ.

Belongs to the prokaryotic/mitochondrial release factor family. In terms of processing, methylated by PrmC. Methylation increases the termination efficiency of RF1.

The protein resides in the cytoplasm. Functionally, peptide chain release factor 1 directs the termination of translation in response to the peptide chain termination codons UAG and UAA. In Borreliella burgdorferi (strain ATCC 35210 / DSM 4680 / CIP 102532 / B31) (Borrelia burgdorferi), this protein is Peptide chain release factor 1 (prfA).